The primary structure comprises 87 residues: Conotoxin QcMNCL-XIII0.1 (87 aa).

The signal sequence occupies residues 1–18 (MNCLQLLLVLLLISTIAA). The propeptide occupies 19–34 (LHGDGRVPQRRGRNIR).

In terms of processing, contains 4 disulfide bonds. In terms of tissue distribution, expressed by the venom duct.

The protein localises to the secreted. In terms of biological role, may interact and inhibit Cav3.1/CACNA1G calcium channels. In a ex vivo model, shows ability to block nerve signal transduction. The polypeptide is Conotoxin QcMNCL-XIII0.1 (Conus quercinus (Oak cone)).